Reading from the N-terminus, the 297-residue chain is 4-hydroxy-tetrahydrodipicolinate synthase (297 aa).

Residue Thr-50 coordinates pyruvate. Tyr-139 acts as the Proton donor/acceptor in catalysis. The active-site Schiff-base intermediate with substrate is Lys-167. Residue Val-209 coordinates pyruvate.

Belongs to the DapA family. Homotetramer; dimer of dimers.

The protein resides in the cytoplasm. The catalysed reaction is L-aspartate 4-semialdehyde + pyruvate = (2S,4S)-4-hydroxy-2,3,4,5-tetrahydrodipicolinate + H2O + H(+). Its pathway is amino-acid biosynthesis; L-lysine biosynthesis via DAP pathway; (S)-tetrahydrodipicolinate from L-aspartate: step 3/4. Functionally, catalyzes the condensation of (S)-aspartate-beta-semialdehyde [(S)-ASA] and pyruvate to 4-hydroxy-tetrahydrodipicolinate (HTPA). The chain is 4-hydroxy-tetrahydrodipicolinate synthase from Microcystis aeruginosa (strain NIES-843 / IAM M-2473).